We begin with the raw amino-acid sequence, 298 residues long: ATP synthase gamma chain (298 aa).

It belongs to the ATPase gamma chain family. In terms of assembly, F-type ATPases have 2 components, CF(1) - the catalytic core - and CF(0) - the membrane proton channel. CF(1) has five subunits: alpha(3), beta(3), gamma(1), delta(1), epsilon(1). CF(0) has three main subunits: a, b and c.

The protein localises to the cell membrane. Produces ATP from ADP in the presence of a proton gradient across the membrane. The gamma chain is believed to be important in regulating ATPase activity and the flow of protons through the CF(0) complex. The sequence is that of ATP synthase gamma chain from Parafrankia sp. (strain EAN1pec).